A 179-amino-acid chain; its full sequence is MLRFKELYKKKIIESLKKEFSFKNQHEIPQIKKIVINMGVGEAIADSKVINNALNDLTLISGQKPIVTLARKSIATFKLRENMKIGCKVTLRKDRMYDFLERLVIVALPRVKEFRGFSYKSFDGKGNFTFGLKEQIVFPEINYDKIDTIRGMDITIVTSAKTDQESKFLLSGFNLPFYN.

The protein belongs to the universal ribosomal protein uL5 family. Part of the 50S ribosomal subunit; part of the 5S rRNA/L5/L18/L25 subcomplex. Contacts the 5S rRNA and the P site tRNA. Forms a bridge to the 30S subunit in the 70S ribosome.

This is one of the proteins that bind and probably mediate the attachment of the 5S RNA into the large ribosomal subunit, where it forms part of the central protuberance. In the 70S ribosome it contacts protein S13 of the 30S subunit (bridge B1b), connecting the 2 subunits; this bridge is implicated in subunit movement. Contacts the P site tRNA; the 5S rRNA and some of its associated proteins might help stabilize positioning of ribosome-bound tRNAs. The sequence is that of Large ribosomal subunit protein uL5 from Rickettsia typhi (strain ATCC VR-144 / Wilmington).